The chain runs to 274 residues: Rhamnulose-1-phosphate aldolase (274 aa).

Glutamate 117 is an active-site residue. 3 residues coordinate Zn(2+): histidine 141, histidine 143, and histidine 212.

It belongs to the aldolase class II family. RhaD subfamily. In terms of assembly, homotetramer. Requires Zn(2+) as cofactor.

The protein resides in the cytoplasm. The enzyme catalyses L-rhamnulose 1-phosphate = (S)-lactaldehyde + dihydroxyacetone phosphate. It functions in the pathway carbohydrate degradation; L-rhamnose degradation; glycerone phosphate from L-rhamnose: step 3/3. Functionally, catalyzes the reversible cleavage of L-rhamnulose-1-phosphate to dihydroxyacetone phosphate (DHAP) and L-lactaldehyde. In Escherichia fergusonii (strain ATCC 35469 / DSM 13698 / CCUG 18766 / IAM 14443 / JCM 21226 / LMG 7866 / NBRC 102419 / NCTC 12128 / CDC 0568-73), this protein is Rhamnulose-1-phosphate aldolase.